The sequence spans 190 residues: MIGSLTGIIEEIYITYIILNVGNVGYIVHVSQRVLQTCKIGNNIKLYIETHVNRDNLTQLYGFLDKQEQDYMRMLITINGINYKTAMSILSKLSPEQIFSAVVSNNKNAFRGNGIGEKLAGRITTELQYKISKMPIEETLIIKEDDSLAALISLGYDKLKAFNAIQEIKSDFPNANIQEIIRKALQKLSQ.

A domain I region spans residues 1–64; sequence MIGSLTGIIE…DNLTQLYGFL (64 aa). The segment at 65-142 is domain II; that stretch reads DKQEQDYMRM…KMPIEETLII (78 aa). Residue K143 is a region of interest, flexible linker. The domain III stretch occupies residues 143-190; sequence KEDDSLAALISLGYDKLKAFNAIQEIKSDFPNANIQEIIRKALQKLSQ.

Belongs to the RuvA family. Homotetramer. Forms an RuvA(8)-RuvB(12)-Holliday junction (HJ) complex. HJ DNA is sandwiched between 2 RuvA tetramers; dsDNA enters through RuvA and exits via RuvB. An RuvB hexamer assembles on each DNA strand where it exits the tetramer. Each RuvB hexamer is contacted by two RuvA subunits (via domain III) on 2 adjacent RuvB subunits; this complex drives branch migration. In the full resolvosome a probable DNA-RuvA(4)-RuvB(12)-RuvC(2) complex forms which resolves the HJ.

The protein localises to the cytoplasm. Its function is as follows. The RuvA-RuvB-RuvC complex processes Holliday junction (HJ) DNA during genetic recombination and DNA repair, while the RuvA-RuvB complex plays an important role in the rescue of blocked DNA replication forks via replication fork reversal (RFR). RuvA specifically binds to HJ cruciform DNA, conferring on it an open structure. The RuvB hexamer acts as an ATP-dependent pump, pulling dsDNA into and through the RuvAB complex. HJ branch migration allows RuvC to scan DNA until it finds its consensus sequence, where it cleaves and resolves the cruciform DNA. The chain is Holliday junction branch migration complex subunit RuvA from Ehrlichia canis (strain Jake).